The following is a 900-amino-acid chain: MARTDQGLGAESEPLTNQSHRHSNSFSSTDSLSTDGSLFGDDMNATQFQKSTQLPEETPYRDIEEGVEGEPESDILSHPRDKSKRSRGSRWIWVIGLLCLGGWILAFILFWGRRNNNSDISSSVAAVHDAESATGATSYGKPLTLDSVLNGSWGRRKHSISWVAGPDGEDGLLLERGEDGKKGYLRVESILSRQNETDADDGLILMESGTIEANGKYLQPSETWPSPNFKSVLVAVDAVSNWRYSFTATYWLFDVKTQTAQPLDPDAPKGRIQLASWSPNSDAVVFTRDNNLYLRRLDSTTVTQITKDGGKDVFNGIPDWVYEEEVYGSDTATWWSNDGKYVAFLRTNESMVPEFPIEYYMSRLSGKHPSPGLEKYPDVRKIKYPKAGAPNPVVTLQFYDVESTDVFSVNVSGGFADDDRLITEVVWASETKVLVKEFNRESDVVRTVLIDVGSRSGDVIRVDNFAQDDGGWAEVTQSTTFIPADPANGRPDDGYLDIVVHDGYDHWGYFTPVNNSQPILLTSGPWEVVDTQPAVDLRNGIVYLVATKESPTQRHVYSVKLDGSDFQAMTDTSKAGYYDVSFSIGGGYALLSYEGPHIPWQKLVNTPSNQQHFEEVIEQNEHLFSMIEKYALPAEIYQNITIDNITLQVVERRPPHFNPIKKYPVLFWLYGGPGSQSVDRKFMVDFQSYVSSTLGYIVVTVDGRGTGHIGRIARTIVRGNLGFWEARDQIETAKAWAKKPYVDKDHIAIWGWSYGGFMTLKTLEQDAGQTFQYGMAVSPVTDWRFYDSIYTERYMHTPEHNPTGYEHSAISNMTALQQNVRFLIMHGTADDNVHFQNTLSLIDKLDMGGVENYDVHVYPDSDHSIYFHNAHKMVYDRLSSWLVNAFTDEWHHVGSALAAT.

Residues 1–83 (MARTDQGLGA…DILSHPRDKS (83 aa)) are disordered. Topologically, residues 1–90 (MARTDQGLGA…DKSKRSRGSR (90 aa)) are cytoplasmic. The segment covering 24–39 (NSFSSTDSLSTDGSLF) has biased composition (low complexity). The span at 44–55 (NATQFQKSTQLP) shows a compositional bias: polar residues. A helical; Signal-anchor for type II membrane protein membrane pass occupies residues 91–111 (WIWVIGLLCLGGWILAFILFW). The Vacuolar segment spans residues 112–900 (GRRNNNSDIS…HHVGSALAAT (789 aa)). N-linked (GlcNAc...) asparagine glycosylation is found at asparagine 150, asparagine 195, asparagine 348, asparagine 410, asparagine 514, asparagine 639, and asparagine 644. The active-site Charge relay system is serine 753. Asparagine 812 carries an N-linked (GlcNAc...) asparagine glycan. Residues aspartate 830 and histidine 863 each act as charge relay system in the active site.

The protein belongs to the peptidase S9B family.

The protein resides in the vacuole membrane. It catalyses the reaction Release of an N-terminal dipeptide, Xaa-Yaa-|-Zaa-, from a polypeptide, preferentially when Yaa is Pro, provided Zaa is neither Pro nor hydroxyproline.. Functionally, type IV dipeptidyl-peptidase which removes N-terminal dipeptides sequentially from polypeptides having unsubstituted N-termini provided that the penultimate residue is proline. This Talaromyces stipitatus (strain ATCC 10500 / CBS 375.48 / QM 6759 / NRRL 1006) (Penicillium stipitatum) protein is Probable dipeptidyl-aminopeptidase B (dapB).